The primary structure comprises 1025 residues: Putative receptor-like protein kinase At3g47110 (1025 aa).

The N-terminal stretch at 1–30 (MGVPCIVMRLILVSALLVSVSLEHSDMVCA) is a signal peptide. Topologically, residues 31-653 (QTIRLTEETD…LPRRHSSVRK (623 aa)) are extracellular. N-linked (GlcNAc...) asparagine glycans are attached at residues asparagine 63 and asparagine 103. LRR repeat units follow at residues 104–128 (LSFL…VGNL), 130–151 (RLQY…VLSN), 152–175 (CSSL…EFGS), 176–200 (LSKL…LGNL), 202–224 (SLQM…IARL), 226–248 (QMIF…IYNL), 249–271 (SSLI…DFGS), 273–297 (LPNL…LSNI), 298–323 (SSLR…RLQN), and 325–344 (LLLG…DLDF). N-linked (GlcNAc...) asparagine glycans are attached at residues asparagine 135 and asparagine 151. N-linked (GlcNAc...) asparagine glycans are attached at residues asparagine 188 and asparagine 199. Asparagine 247 carries an N-linked (GlcNAc...) asparagine glycan. N-linked (GlcNAc...) asparagine glycosylation occurs at asparagine 296. Residues asparagine 331, asparagine 336, asparagine 350, and asparagine 374 are each glycosylated (N-linked (GlcNAc...) asparagine). 11 LRR repeats span residues 351–374 (CSQL…FIAN), 376–400 (STQL…IGNL), 401–424 (VSLQ…LGEL), 426–448 (ELRK…LGNI), 449–472 (SGLT…LGSC), 473–496 (SYLL…LMEL), 498–520 (SLVV…IGKL), 521–544 (KFLL…LANC), 546–567 (SLEF…IRGL), 568–593 (TGLR…NFSK), and 595–616 (QNLN…VFRN). N-linked (GlcNAc...) asparagine glycans are attached at residues asparagine 447, asparagine 458, asparagine 486, and asparagine 503. 4 N-linked (GlcNAc...) asparagine glycosylation sites follow: asparagine 579, asparagine 590, asparagine 598, and asparagine 616. Residues 654–674 (IITICVSAVMAALLLLCLCVV) traverse the membrane as a helical segment. The Cytoplasmic portion of the chain corresponds to 675-1025 (YLCWYKLRVK…RESFFRDEET (351 aa)). Threonine 716 is subject to Phosphothreonine. The Protein kinase domain occupies 719-1020 (FSSSNLIGSG…KLVSIRESFF (302 aa)). ATP-binding positions include 725 to 733 (IGSGNFGAV) and lysine 748. Phosphotyrosine is present on residues tyrosine 798 and tyrosine 843. Aspartate 856 (proton acceptor) is an active-site residue. Tyrosine 904 is subject to Phosphotyrosine.

It belongs to the protein kinase superfamily. Ser/Thr protein kinase family.

The protein localises to the cell membrane. The catalysed reaction is L-seryl-[protein] + ATP = O-phospho-L-seryl-[protein] + ADP + H(+). It catalyses the reaction L-threonyl-[protein] + ATP = O-phospho-L-threonyl-[protein] + ADP + H(+). The polypeptide is Putative receptor-like protein kinase At3g47110 (Arabidopsis thaliana (Mouse-ear cress)).